A 158-amino-acid chain; its full sequence is MNNKVTLLPPRVFFCLSWSVMVNIDRRKSDRSVNLDDQHSNKPPSESLISLLSLTSSMSISSLLSLLIIVAVLFPPLYISGLPWIMSFKSVFSFFSLSITSFIMVPFLLISLTILCKIELSSKCITSPSISKFNCPDIINFVNSSLISSKSIPSVDDK.

A run of 2 helical transmembrane segments spans residues 66–86 (LLII…PWIM) and 94–114 (FFSL…SLTI).

The protein resides in the membrane. This is an uncharacterized protein from Saccharomyces cerevisiae (strain ATCC 204508 / S288c) (Baker's yeast).